The primary structure comprises 82 residues: Small ribosomal subunit protein bS16 (82 aa).

This sequence belongs to the bacterial ribosomal protein bS16 family.

The polypeptide is Small ribosomal subunit protein bS16 (Shewanella sp. (strain MR-4)).